The chain runs to 505 residues: Flagellin (505 aa).

This sequence belongs to the bacterial flagellin family.

Its subcellular location is the secreted. It is found in the bacterial flagellum. Flagellin is the subunit protein which polymerizes to form the filaments of bacterial flagella. This chain is Flagellin (fliC), found in Salmonella moscow.